A 2450-amino-acid chain; its full sequence is Tetratricopeptide repeat protein 28 (2450 aa).

At methionine 1 the chain carries N-acetylmethionine. Residues 1 to 36 (MEQPPPLAPEPASARSRRRREPESPPAPIPLFGART) form a disordered region. Serine 24 bears the Phosphoserine mark. TPR repeat units lie at residues 52 to 85 (FVEKVRQSNQACHDGDFHTAIVLYNEALAVDPQN), 87 to 119 (ILYSNRSAAYMKTQQYHKALDDAIKARLLNPKW), 120 to 153 (PKAYFRQGVALQYLGRHADALAAFASGLAQDPKS), 190 to 223 (FVVVSVVGQELLTAGHHGASVVVLEAALKIGTCS), 228 to 261 (GSVFSALSSAHWSLGNTEKSTGYMQQDLDVAKTL), 268 to 301 (CRAHGNLGSAFFSKGNYREALTNHRHQLVLAMKL), 308 to 341 (SSALSSLGHVYTAIGDYPNALASHKQCVLLAKQS), 348 to 381 (ARELGNMGAVYIAMGDFENAVQCHEQHLRIAKDL), 388 to 421 (ARAYSNLGSAYHYRRNFDKAMSYHNCVLELAQEL), 428 to 461 (MRAYAGLGHAARCMQDLERAKQYHEQQLGIAEDL), 468 to 501 (GRASSNLGIIHQMKGDYDTALKLHKTHLCIAQEL), 508 to 541 (GRAYGNMGNAYNALGMYDQAVKYHRQELQISMEV), 548 to 581 (ASTHGNLAVAYQALGAHDRALQHYQNHLNIAREL), 588 to 621 (ARALSNLGNFHCSRGEYVQAAPYYEQYLRLAPDL), 628 to 661 (GKVCHNLGYAHYCLGNYQEAVKYYEQDLALAKDL), 668 to 701 (AKAYCNLGLAFKALLNFAKAEECQKYLLSLAQSL), 708 to 741 (FRALGNLGDIFICKKDINGAIKFYEQQLGLSHHV), 748 to 781 (ASAYAALGTAYRMVQKYDKALGYHTQELEVYQEL), 788 to 821 (CRAHGHLAAVYMALGKYTMAFKCYQEQLELGRKL), 828 to 861 (AQVYGNMGITKMNMNVMEDAIGYFEQQLAMLQQL), 871 to 904 (GRAYGNLGDCYEALGDYEEAIKYYEQYLSVAQSL), 911 to 944 (AKAYRGLGNGHRATGSLQQALVCFEKRLVVAHEL), 951 to 984 (AQAYGELGSLHSQLGNYEQAISCLERQLNIARDM), 991 to 1024 (SDAACGLGGVYQQMGEYDTALQYHQLDLQIAEET), 1031 to 1064 (GRAYGNLGLTYESLGTFERAVVYQEQHLSIAAQM), 1071 to 1104 (TVSYSSLGRTHHALQNYSQAVMYLQEGLRLAEQL), 1111 to 1144 (AKIRHGLGLSLWASGNLEEAQHQLYRASALFETI), and 1163 to 1196 (TSSYQALQRVLVSLGHHDEALAVAERGRTRAFAD). A disordered region spans residues 1362 to 1381 (SGTVSPSKDGTSSLPRRQNS). Phosphoserine occurs at positions 1584 and 2098. The interval 2001-2364 (KPEGGLEGGG…GTLTSKRDVL (364 aa)) is disordered. Residues 2090–2116 (SVSSKGSVSTPNSPVKMTLIPSPNSPF) are compositionally biased toward polar residues. Residues 2124–2140 (SSDTGESDQSSTETDST) show a composition bias toward low complexity. Over residues 2143–2153 (SQEESTPKLDP) the composition is skewed to basic and acidic residues. A compositionally biased stretch (polar residues) spans 2191-2206 (APSSTTVFRASETSAF). Serine 2216 carries the post-translational modification Phosphoserine. A compositionally biased stretch (polar residues) spans 2229 to 2245 (ARSSSLPKVSSPATSEV). Low complexity-rich tracts occupy residues 2252-2262 (SPPGSSHPSPG) and 2296-2320 (SPACSAPSPALSYSSAGSARSSPAD). 2 positions are modified to phosphoserine: serine 2365 and serine 2370.

In terms of assembly, interacts with AURKB. In terms of tissue distribution, expressed in embryos at all stages examined. In adult tissues, detected in heart and at low levels in kidney and testis.

The protein resides in the cytoplasm. The protein localises to the cytoskeleton. It is found in the microtubule organizing center. Its subcellular location is the centrosome. It localises to the spindle. The protein resides in the spindle pole. The protein localises to the midbody. Its function is as follows. During mitosis, may be involved in the condensation of spindle midzone microtubules, leading to the formation of midbody. Functionally, essential for the formation and integrity of the midbody. Max play a critical role in the progress of mitosis and cytokinesis during cell cycle. The polypeptide is Tetratricopeptide repeat protein 28 (Ttc28) (Mus musculus (Mouse)).